The following is a 362-amino-acid chain: [LysW]-lysine hydrolase (362 aa).

Zn(2+) is bound at residue histidine 69. Aspartate 71 is a catalytic residue. Aspartate 94 is a binding site for Zn(2+). Glutamate 127 functions as the Proton acceptor in the catalytic mechanism. The Zn(2+) site is built by glutamate 128, glutamate 151, and histidine 334.

It belongs to the peptidase M20A family. LysK subfamily. Requires Zn(2+) as cofactor. Co(2+) is required as a cofactor.

The protein resides in the cytoplasm. It carries out the reaction [amino-group carrier protein]-C-terminal-gamma-(L-lysyl)-L-glutamate + H2O = [amino-group carrier protein]-C-terminal-L-glutamate + L-lysine. It participates in amino-acid biosynthesis; L-lysine biosynthesis via AAA pathway; L-lysine from L-alpha-aminoadipate (Thermus route): step 5/5. Its function is as follows. Catalyzes the release of L-lysine from [LysW]-gamma-L-lysine. This is [LysW]-lysine hydrolase from Deinococcus radiodurans (strain ATCC 13939 / DSM 20539 / JCM 16871 / CCUG 27074 / LMG 4051 / NBRC 15346 / NCIMB 9279 / VKM B-1422 / R1).